The following is a 360-amino-acid chain: Phospho-N-acetylmuramoyl-pentapeptide-transferase (360 aa).

The next 10 helical transmembrane spans lie at 21 to 41 (YVTF…LWWG), 74 to 94 (MGGI…GDLA), 97 to 117 (YVWV…IDDY), 135 to 155 (ILQS…ADLV), 168 to 188 (IMPQ…VGSS), 199 to 219 (GLAI…AYLS), 236 to 256 (AGEL…FLWF), 263 to 283 (VFMG…IAVL), 288 to 308 (ILLV…ILQV), and 338 to 358 (VIVR…ATLK).

It belongs to the glycosyltransferase 4 family. MraY subfamily. Mg(2+) is required as a cofactor.

The protein localises to the cell inner membrane. It carries out the reaction UDP-N-acetyl-alpha-D-muramoyl-L-alanyl-gamma-D-glutamyl-meso-2,6-diaminopimeloyl-D-alanyl-D-alanine + di-trans,octa-cis-undecaprenyl phosphate = di-trans,octa-cis-undecaprenyl diphospho-N-acetyl-alpha-D-muramoyl-L-alanyl-D-glutamyl-meso-2,6-diaminopimeloyl-D-alanyl-D-alanine + UMP. The protein operates within cell wall biogenesis; peptidoglycan biosynthesis. Functionally, catalyzes the initial step of the lipid cycle reactions in the biosynthesis of the cell wall peptidoglycan: transfers peptidoglycan precursor phospho-MurNAc-pentapeptide from UDP-MurNAc-pentapeptide onto the lipid carrier undecaprenyl phosphate, yielding undecaprenyl-pyrophosphoryl-MurNAc-pentapeptide, known as lipid I. This is Phospho-N-acetylmuramoyl-pentapeptide-transferase from Shewanella sediminis (strain HAW-EB3).